The following is a 433-amino-acid chain: PC-esterase domain-containing protein 1B (433 aa).

Positions 386-433 (PPCHQRQAPVVHRGFPRHFARGPYSNPWRDRPRRPPKHSPAGLESRPQ) are disordered.

The protein belongs to the PC-esterase family.

The chain is PC-esterase domain-containing protein 1B (Pced1b) from Mus musculus (Mouse).